Here is a 795-residue protein sequence, read N- to C-terminus: Phenylalanine--tRNA ligase beta subunit (795 aa).

One can recognise a tRNA-binding domain in the interval 39–148 (AGSFHGVVVG…ADAPIGTDIR (110 aa)). Residues 401-476 (PKRATITLRR…RVYGYNNIPD (76 aa)) form the B5 domain. Mg(2+) contacts are provided by aspartate 454, aspartate 460, glutamate 463, and glutamate 464. In terms of domain architecture, FDX-ACB spans 701–794 (SRFPANRRDI…LKERFQASLR (94 aa)).

The protein belongs to the phenylalanyl-tRNA synthetase beta subunit family. Type 1 subfamily. As to quaternary structure, tetramer of two alpha and two beta subunits. Requires Mg(2+) as cofactor.

The protein resides in the cytoplasm. The catalysed reaction is tRNA(Phe) + L-phenylalanine + ATP = L-phenylalanyl-tRNA(Phe) + AMP + diphosphate + H(+). The polypeptide is Phenylalanine--tRNA ligase beta subunit (pheT) (Escherichia coli (strain K12)).